A 266-amino-acid chain; its full sequence is Chymotrypsin-like elastase family member 1 (266 aa).

The first 16 residues, 1-16 (MLRLLVFTSLVLYGHS), serve as a signal peptide directing secretion. Positions 17–26 (TQDFPETNAR) are cleaved as a propeptide — activation peptide. The Peptidase S1 domain occupies 27 to 264 (VVGGTAVSKN…YISWINNAIA (238 aa)). C56 and C72 are oxidised to a cystine. H71 acts as the Charge relay system in catalysis. The Ca(2+) site is built by D85, N87, Q90, and E95. N87 is a glycosylation site (N-linked (GlcNAc...) asparagine). D119 (charge relay system) is an active-site residue. 3 disulfide bridges follow: C153-C220, C184-C200, and C210-C240. S214 acts as the Charge relay system in catalysis. Residue N241 is glycosylated (N-linked (GlcNAc...) asparagine).

The protein belongs to the peptidase S1 family. Elastase subfamily. Requires Ca(2+) as cofactor. As to expression, pancreas.

It is found in the secreted. The enzyme catalyses Hydrolysis of proteins, including elastin. Preferential cleavage: Ala-|-Xaa.. Its function is as follows. Serine proteases that hydrolyze many proteins in addition to elastin. This is Chymotrypsin-like elastase family member 1 (CELA1) from Bos taurus (Bovine).